The chain runs to 354 residues: Hydrophobic dipeptide epimerase (354 aa).

Substrate-binding positions include threonine 134, lysine 159, and 159-161 (KIK). A Mg(2+)-binding site is contributed by aspartate 189. Residue asparagine 191 coordinates substrate. Residues glutamate 215 and aspartate 240 each contribute to the Mg(2+) site. Residues lysine 264, 292 to 295 (CMAE), and 318 to 320 (DLD) each bind substrate.

The protein belongs to the mandelate racemase/muconate lactonizing enzyme family. Mg(2+) is required as a cofactor.

Catalyzes the epimerization of L-Ile-L-Tyr to L-Ile-D-Tyr (in vitro). Catalyzes the epimerization of dipeptides, with a preference for substrates with a hydrophobic or basic amino acid in the first position, followed by an aromatic residue in the second position. Has epimerase activity with L-Ile-L-Tyr, L-Val-L-Tyr and L-Arg-L-Tyr (in vitro). The chain is Hydrophobic dipeptide epimerase from Enterococcus faecalis (strain ATCC 700802 / V583).